A 272-amino-acid polypeptide reads, in one-letter code: MSTIAESARIHPMAVVEDGAVIGEGVKIGPFCHVGPHVVLHENVELLSHAVVAGRTVIGKGTRIFPMAVIGGDPQSVHHGGEETTLSVGANCTMREGVTMNTGTADFGGQTIVGDNNLFLANSHVAHDCKVGNHVIMSNNVMLAGHVVIEDRVILGGGSAVHQFTRVGRQAFVGGLSAVSYDVIPYGMLNGNPGLLSGLNVVGMTRAGVDRAVIHRVRRAYKSIFEGTGSVRENAAAIRDEYADCEQAVQILDFIAADSDRALSSPTRGQKG.

Belongs to the transferase hexapeptide repeat family. LpxA subfamily. In terms of assembly, homotrimer.

Its subcellular location is the cytoplasm. It carries out the reaction a (3R)-hydroxyacyl-[ACP] + UDP-N-acetyl-alpha-D-glucosamine = a UDP-3-O-[(3R)-3-hydroxyacyl]-N-acetyl-alpha-D-glucosamine + holo-[ACP]. The protein operates within glycolipid biosynthesis; lipid IV(A) biosynthesis; lipid IV(A) from (3R)-3-hydroxytetradecanoyl-[acyl-carrier-protein] and UDP-N-acetyl-alpha-D-glucosamine: step 1/6. Its function is as follows. Involved in the biosynthesis of lipid A, a phosphorylated glycolipid that anchors the lipopolysaccharide to the outer membrane of the cell. This is Acyl-[acyl-carrier-protein]--UDP-N-acetylglucosamine O-acyltransferase from Rhizobium leguminosarum bv. trifolii (strain WSM2304).